The chain runs to 209 residues: Uracil phosphoribosyltransferase (209 aa).

Residues Arg79, Arg104, and 131-139 (DPMLATGGS) each bind 5-phospho-alpha-D-ribose 1-diphosphate. Uracil-binding positions include Ile194 and 199-201 (GDA). Residue Asp200 coordinates 5-phospho-alpha-D-ribose 1-diphosphate.

Belongs to the UPRTase family. Mg(2+) serves as cofactor.

The catalysed reaction is UMP + diphosphate = 5-phospho-alpha-D-ribose 1-diphosphate + uracil. The protein operates within pyrimidine metabolism; UMP biosynthesis via salvage pathway; UMP from uracil: step 1/1. Its activity is regulated as follows. Allosterically activated by GTP. In terms of biological role, catalyzes the conversion of uracil and 5-phospho-alpha-D-ribose 1-diphosphate (PRPP) to UMP and diphosphate. The sequence is that of Uracil phosphoribosyltransferase from Shouchella clausii (strain KSM-K16) (Alkalihalobacillus clausii).